Consider the following 259-residue polypeptide: Leucine-rich repeat-containing protein 61 (259 aa).

3 LRR repeats span residues 54 to 75 (NLEW…ASLR), 76 to 97 (QLAV…AACE), and 98 to 119 (NLQS…QCLA). Residues 138-178 (NPLCANASYWAVVRELLPGLKVIDGERVSGRGSELYQLCRD) enclose the LRRCT domain.

The sequence is that of Leucine-rich repeat-containing protein 61 (Lrrc61) from Mus musculus (Mouse).